Reading from the N-terminus, the 222-residue chain is Interleukin-12 subunit alpha (222 aa).

The first 25 residues, 1-25, serve as a signal peptide directing secretion; it reads MCPLRNLLLVATLVLLNHLDHLSLG. 3 cysteine pairs are disulfide-bonded: C40/C113, C67/C199, and C88/C126. N42 and N96 each carry an N-linked (GlcNAc...) asparagine glycan.

It belongs to the IL-6 superfamily. In terms of assembly, heterodimer with IL12B; disulfide-linked. This heterodimer is known as interleukin IL-12. Heterodimer with EBI3/IL27B; not disulfide-linked. This heterodimer is known as interleukin IL-35. Interacts with NBR1; this interaction promotes IL-12 secretion.

Its subcellular location is the secreted. In terms of biological role, heterodimerizes with IL12B to form the IL-12 cytokine or with EBI3/IL27B to form the IL-35 cytokine. IL-12 is primarily produced by professional antigen-presenting cells (APCs) such as B-cells and dendritic cells (DCs) as well as macrophages and granulocytes and regulates T-cell and natural killer-cell responses, induces the production of interferon-gamma (IFN-gamma), favors the differentiation of T-helper 1 (Th1) cells and is an important link between innate resistance and adaptive immunity. Mechanistically, exerts its biological effects through a receptor composed of IL12R1 and IL12R2 subunits. Binding to the receptor results in the rapid tyrosine phosphorylation of a number of cellular substrates including the JAK family kinases TYK2 and JAK2. In turn, recruited STAT4 gets phosphorylated and translocates to the nucleus where it regulates cytokine/growth factor responsive genes. As part of IL-35, plays essential roles in maintaining the immune homeostasis of the liver microenvironment and also functions as an immune-suppressive cytokine. Mediates biological events through unconventional receptors composed of IL12RB2 and gp130/IL6ST heterodimers or homodimers. Signaling requires the transcription factors STAT1 and STAT4, which form a unique heterodimer that binds to distinct DNA sites. This Sus scrofa (Pig) protein is Interleukin-12 subunit alpha (IL12A).